We begin with the raw amino-acid sequence, 27 residues long: Conotoxin as14a (27 aa).

2 cysteine pairs are disulfide-bonded: Cys-6/Cys-26 and Cys-10/Cys-22.

It belongs to the conotoxin L superfamily. As to expression, expressed by the venom duct.

The protein localises to the secreted. In terms of biological role, in vivo, intracranial injection, elicits scratching and grooming activity in mice. The polypeptide is Conotoxin as14a (Conus cancellatus (Cancellate cone)).